The chain runs to 154 residues: MPEFTHINGDKVQMVDITAKGEVKRMARAEGTITLRSDTVAAIRTGTVLKGNVLATARIAATLAVKQTPQLIPLCHQIPIGAITVDFTDTEVSITAEVTVTSYGRTGVEMEALTGVSVALLTIWDMVKSAEKDENGQYPVTGISDIRVIEKIKG.

Residues 74–76 (LCH) and 110–111 (ME) each bind substrate. Asp-125 is an active-site residue.

The protein belongs to the MoaC family. As to quaternary structure, homohexamer; trimer of dimers.

The enzyme catalyses (8S)-3',8-cyclo-7,8-dihydroguanosine 5'-triphosphate = cyclic pyranopterin phosphate + diphosphate. Its pathway is cofactor biosynthesis; molybdopterin biosynthesis. Functionally, catalyzes the conversion of (8S)-3',8-cyclo-7,8-dihydroguanosine 5'-triphosphate to cyclic pyranopterin monophosphate (cPMP). The polypeptide is Probable cyclic pyranopterin monophosphate synthase (Methanosphaerula palustris (strain ATCC BAA-1556 / DSM 19958 / E1-9c)).